Reading from the N-terminus, the 400-residue chain is E3 ubiquitin-protein ligase RNF149 (400 aa).

The N-terminal stretch at 1 to 32 (MAWRRREASVGARGVLALALLALALCVPGARG) is a signal peptide. N-linked (GlcNAc...) asparagine glycosylation is found at asparagine 52 and asparagine 145. Residues 67-175 (SSPKEGAHGL…PKGREILELV (109 aa)) form the PA domain. A helical membrane pass occupies residues 201 to 221 (VVFVAIAFITMMIISLAWLIF). The segment at 269 to 310 (CAVCIENFKVKDIIRILPCKHIFHRICIDPWLLDHRTCPMCK) adopts an RING-type; atypical zinc-finger fold. The interval 325–400 (DVQEMPAPES…SDSRHGGPIS (76 aa)) is disordered. Position 345 is a phosphoserine (serine 345). The segment covering 356–368 (DSSPPSASPAESE) has biased composition (low complexity). Positions 389-400 (GRSDSRHGGPIS) are enriched in basic and acidic residues.

The protein localises to the membrane. It catalyses the reaction S-ubiquitinyl-[E2 ubiquitin-conjugating enzyme]-L-cysteine + [acceptor protein]-L-lysine = [E2 ubiquitin-conjugating enzyme]-L-cysteine + N(6)-ubiquitinyl-[acceptor protein]-L-lysine.. It participates in protein modification; protein ubiquitination. Its function is as follows. E3 ubiquitin-protein ligase. Ubiquitinates BRAF, inducing its proteasomal degradation. The protein is E3 ubiquitin-protein ligase RNF149 (RNF149) of Homo sapiens (Human).